A 338-amino-acid polypeptide reads, in one-letter code: 2-oxoglutarate-dependent dioxygenase ecdG (338 aa).

Residues 165–273 (PSVTNLGFLR…KYTLAYFVRP (109 aa)) form the Fe2OG dioxygenase domain. Positions 190, 192, and 249 each coordinate Fe cation. 2-oxoglutarate is bound at residue Lys264.

The protein belongs to the iron/ascorbate-dependent oxidoreductase family. Requires Fe(2+) as cofactor.

It functions in the pathway antifungal biosynthesis. Its function is as follows. 2-oxoglutarate-dependent dioxygenase; part of the gene cluster that mediates the biosynthesis of echinocandin B, a fungal lipidated cyclic hexapeptide that acts as an antifungal agent. Linoleoyl-AMP, produced by the fatty-acyl-AMP ligase ecdI, is transferred to the initiation carrier domain (T0) of ecdA. The linoleoyl-S-phosphopantetheinyl-T0 is sequentially extended with L-ornithine, L-threonine, L-proline, L-homotyrosine, L-threonine, and 4R-methyl-L-proline to form the linear hexapeptide. Thereafter, the terminal condensation (C7) performs macrocyclization of the NRPS product and the cyclic scaffold is released from ecdA. All six of the amino acid residues are hydroxylated, including 4R,5R-dihydroxy-L-ornithine, 4R-hydroxyl-L-proline, 3S,4S-dihydroxy-L-homotyrosine, and 3S-hydroxyl-4S-methyl-L-prolin. In the pathway, all the hydroxylation reactions are proposed to occur following completion of the cyclic peptide, so the unhydroxylated precursor produced by ecdA will undergo six rounds of hydroxylation. Five hydroxylase genes (ecdG, ecdH, ecdK, htyE and htyF) are embedded within the echinocandin B (ecd) and L-homotyrosine (hty) clusters. The protein is 2-oxoglutarate-dependent dioxygenase ecdG of Aspergillus rugulosus (Emericella rugulosa).